Here is a 508-residue protein sequence, read N- to C-terminus: Photosystem II CP47 reaction center protein (508 aa).

The next 6 helical transmembrane spans lie at 21-36, 101-115, 140-156, 203-218, 237-252, and 457-472; these read SVHI…WAGS, IVFS…IWHW, GIHL…FGAF, IAAG…FHLS, VLSS…AFVV, and SFAL…HGAR.

The protein belongs to the PsbB/PsbC family. PsbB subfamily. PSII is composed of 1 copy each of membrane proteins PsbA, PsbB, PsbC, PsbD, PsbE, PsbF, PsbH, PsbI, PsbJ, PsbK, PsbL, PsbM, PsbT, PsbX, PsbY, PsbZ, Psb30/Ycf12, at least 3 peripheral proteins of the oxygen-evolving complex and a large number of cofactors. It forms dimeric complexes. The cofactor is Binds multiple chlorophylls. PSII binds additional chlorophylls, carotenoids and specific lipids..

Its subcellular location is the plastid. It is found in the chloroplast thylakoid membrane. Its function is as follows. One of the components of the core complex of photosystem II (PSII). It binds chlorophyll and helps catalyze the primary light-induced photochemical processes of PSII. PSII is a light-driven water:plastoquinone oxidoreductase, using light energy to abstract electrons from H(2)O, generating O(2) and a proton gradient subsequently used for ATP formation. The chain is Photosystem II CP47 reaction center protein from Platanus occidentalis (Sycamore).